We begin with the raw amino-acid sequence, 166 residues long: Large ribosomal subunit protein uL10 (166 aa).

The protein belongs to the universal ribosomal protein uL10 family. Part of the ribosomal stalk of the 50S ribosomal subunit. The N-terminus interacts with L11 and the large rRNA to form the base of the stalk. The C-terminus forms an elongated spine to which L12 dimers bind in a sequential fashion forming a multimeric L10(L12)X complex.

Its function is as follows. Forms part of the ribosomal stalk, playing a central role in the interaction of the ribosome with GTP-bound translation factors. In Shewanella denitrificans (strain OS217 / ATCC BAA-1090 / DSM 15013), this protein is Large ribosomal subunit protein uL10.